The sequence spans 174 residues: Achaete-scute homolog 3 (174 aa).

The interval 92 to 105 (AFIRKRNERERQRV) is basic motif. The 53-residue stretch at 92–144 (AFIRKRNERERQRVKCVNEGYARLRRHLPEDYLEKRLSKVETLRAAIKYISYL) folds into the bHLH domain. The segment at 106 to 144 (KCVNEGYARLRRHLPEDYLEKRLSKVETLRAAIKYISYL) is helix-loop-helix motif. Residues 153–174 (SETKKNPRTASCGSLDPALRVI) form a disordered region.

As to quaternary structure, efficient DNA binding requires dimerization with another bHLH protein. In terms of tissue distribution, expressed in the salivary duct cells. Also expressed at lower levels in testis and epididymis. Expressed in the olfactory epithelium (OE), in a subset of apical microvillar cells.

The protein resides in the nucleus. In terms of biological role, transcriptional repressor. Inhibits myogenesis. Plays a role in progenitor cells which differentiate into ductal and acinar, but not myoepithelial, cell lineages in the salivary glands. Involved in the functions of the microvillar cells and Bowman's glands and probably, in a non-cell-autonomous manner, in the development or regeneration of a complete olfactory epithelium (OE). The polypeptide is Achaete-scute homolog 3 (Ascl3) (Mus musculus (Mouse)).